Reading from the N-terminus, the 73-residue chain is Large ribosomal subunit protein bL31 (73 aa).

Residues Cys16, Cys18, Cys36, and Cys39 each contribute to the Zn(2+) site.

It belongs to the bacterial ribosomal protein bL31 family. Type A subfamily. Part of the 50S ribosomal subunit. The cofactor is Zn(2+).

In terms of biological role, binds the 23S rRNA. This is Large ribosomal subunit protein bL31 from Myxococcus xanthus (strain DK1622).